We begin with the raw amino-acid sequence, 270 residues long: Oxidized low-density lipoprotein receptor 1 (270 aa).

The span at 1 to 14 (MTVDDPKGMKDQLD) shows a compositional bias: basic and acidic residues. Positions 1 to 22 (MTVDDPKGMKDQLDQKPNGKTA) are disordered. At 1 to 33 (MTVDDPKGMKDQLDQKPNGKTAKGFVSSWRWYP) the chain is on the cytoplasmic side. The helical; Signal-anchor for type II membrane protein transmembrane segment at 34–56 (AAVTLGVLCLGLLVTVILLILQL) threads the bilayer. C42 carries S-palmitoyl cysteine lipidation. The interval 57–146 (SQVSDLIKKQ…SGPCPQDWLW (90 aa)) is neck. The Extracellular portion of the chain corresponds to 57–270 (SQVSDLIKKQ…QKKANLLRAQ (214 aa)). N-linked (GlcNAc...) asparagine glycans are attached at residues N69 and N135. A coiled-coil region spans residues 85 to 135 (RRSEKSAQESQKELKEMIETLAHKLDEKSKKLMELHRQNLNLQEVLKEAAN). 3 disulfide bridges follow: C140–C151, C168–C260, and C239–C252. Residues 147–261 (HEENCYQFSS…CILTAFSICQ (115 aa)) enclose the C-type lectin domain.

In terms of assembly, homodimer; disulfide-linked. May form a hexamer composed of 3 homodimers. Interacts with HSP70. Post-translationally, N-glycosylated. In terms of tissue distribution, highly expressed in endothelial cells, aortic intima and lung. Expressed at low level in other tissues.

Its subcellular location is the cell membrane. It is found in the membrane raft. The protein localises to the secreted. In terms of biological role, receptor that mediates the recognition, internalization and degradation of oxidatively modified low density lipoprotein (oxLDL) by vascular endothelial cells. OxLDL is a marker of atherosclerosis that induces vascular endothelial cell activation and dysfunction, resulting in pro-inflammatory responses, pro-oxidative conditions and apoptosis. Its association with oxLDL induces the activation of NF-kappa-B through an increased production of intracellular reactive oxygen and a variety of pro-atherogenic cellular responses including a reduction of nitric oxide (NO) release, monocyte adhesion and apoptosis. In addition to binding oxLDL, it acts as a receptor for the HSP70 protein involved in antigen cross-presentation to naive T-cells in dendritic cells, thereby participating in cell-mediated antigen cross-presentation. Also involved in inflammatory process, by acting as a leukocyte-adhesion molecule at the vascular interface in endotoxin-induced inflammation. Also acts as a receptor for advanced glycation end (AGE) products, activated platelets, monocytes, apoptotic cells and both Gram-negative and Gram-positive bacteria. The polypeptide is Oxidized low-density lipoprotein receptor 1 (OLR1) (Bos taurus (Bovine)).